The sequence spans 231 residues: MKHLLSVFALGGAVLLAGCVAPTPKPNDPYYAPVLPRTPLPAAANNGSIYQAGFEQSLYTDRKAFRVGDIITITLNERTSASKNAGSQIQKNSKADIGLTSLFGSSPNTNNPFGGGDLSLEAGYSGDRTTKGDSKATQGNTLTGSITVTVAEVLPNGIIAVRGEKWMTLNTGEELVRIAGLVRADDIATDNTVPSTRVADARITYSGTGSFADASQPGWLDRFFISPLWPF.

The signal sequence occupies residues 1–18; sequence MKHLLSVFALGGAVLLAG. The N-palmitoyl cysteine moiety is linked to residue C19. C19 carries the S-diacylglycerol cysteine lipid modification.

Belongs to the FlgH family. In terms of assembly, the basal body constitutes a major portion of the flagellar organelle and consists of four rings (L,P,S, and M) mounted on a central rod.

The protein resides in the cell outer membrane. Its subcellular location is the bacterial flagellum basal body. Functionally, assembles around the rod to form the L-ring and probably protects the motor/basal body from shearing forces during rotation. In Pseudomonas entomophila (strain L48), this protein is Flagellar L-ring protein.